The sequence spans 221 residues: Serine protease inhibitor 7 (221 aa).

The N-terminal stretch at 1 to 22 (MKCLFLLCLCLVPIVVFSSTFT) is a signal peptide. Residues 23 to 28 (SKNPIN) constitute a propeptide that is removed on maturation. The Vacuolar targeting signal motif lies at 25 to 30 (NPINLP). 2 cysteine pairs are disulfide-bonded: cysteine 76/cysteine 125 and cysteine 174/cysteine 191.

The protein belongs to the protease inhibitor I3 (leguminous Kunitz-type inhibitor) family. As to expression, tubers. Not detected in root, stem, leaves or flower bud.

It is found in the vacuole. Inhibitor of trypsin (serine protease). May protect the plant by inhibiting proteases of invading organisms. The chain is Serine protease inhibitor 7 from Solanum tuberosum (Potato).